A 149-amino-acid chain; its full sequence is MTYWLVPIQEDMWDVIRDKGIYGYKENLEEFIKEGDYIIIYVSKYYAKRYGGKIVGIVKVLSNWYEDQTPIYPEETVRNKGIYIYRVKVEPVVIGECDMKKILDKIRFIEDKGQIAKYLRNAPANLKRPIPESDAKIVEECLKESLLNI.

The protein belongs to the UPF0310 family.

The protein is UPF0310 protein SSO2595 of Saccharolobus solfataricus (strain ATCC 35092 / DSM 1617 / JCM 11322 / P2) (Sulfolobus solfataricus).